The sequence spans 156 residues: Enhancer of split M1 protein (156 aa).

Positions 1–19 (MMSQTLTLCCLGLVACVYG) are cleaved as a signal peptide. 2 consecutive Kazal-like domains span residues 23-81 (STND…AWCS) and 96-156 (KLEV…EEKC). Intrachain disulfides connect C29–C62, C33–C55, C102–C135, C106–C128, and C114–C156.

The sequence is that of Enhancer of split M1 protein from Drosophila simulans (Fruit fly).